The following is a 287-amino-acid chain: Protein PXR1 (287 aa).

Residues threonine 25–lysine 72 enclose the G-patch domain. The segment covering leucine 143–aspartate 155 has biased composition (basic and acidic residues). The disordered stretch occupies residues leucine 143–valine 254. The span at serine 163–lysine 190 shows a compositional bias: basic residues. Residues aspartate 191 to glutamate 200 show a composition bias toward basic and acidic residues. Basic residues predominate over residues lysine 201–lysine 220. Positions aspartate 221–aspartate 230 are enriched in basic and acidic residues. Residues asparagine 239–proline 251 are compositionally biased toward polar residues.

It belongs to the PINX1 family.

It is found in the nucleus. The protein resides in the nucleolus. In terms of biological role, involved in rRNA-processing at A0, A1 and A2 sites and negatively regulates telomerase. The sequence is that of Protein PXR1 (PXR1) from Vanderwaltozyma polyspora (strain ATCC 22028 / DSM 70294 / BCRC 21397 / CBS 2163 / NBRC 10782 / NRRL Y-8283 / UCD 57-17) (Kluyveromyces polysporus).